Reading from the N-terminus, the 318-residue chain is NAD(P)H-dependent D-xylose reductase (318 aa).

The active-site Proton donor is the Y48. Position 110 (H110) interacts with substrate. Residues 165–166 (SN), 214–223 (SNFGPLSFLE), and 270–280 (KSTFPNTLAVN) each bind NAD(+).

It belongs to the aldo/keto reductase family.

It catalyses the reaction xylitol + NAD(+) = D-xylose + NADH + H(+). It carries out the reaction xylitol + NADP(+) = D-xylose + NADPH + H(+). Its pathway is carbohydrate metabolism; D-xylose degradation. In terms of biological role, reduces D-xylose into xylitol. Has a preference for NADPH, but can also utilize NADH as cosubstrate. The polypeptide is NAD(P)H-dependent D-xylose reductase (XYL1) (Pachysolen tannophilus (Yeast)).